We begin with the raw amino-acid sequence, 181 residues long: Ribosome maturation factor RimM (181 aa).

Residues 100–177 (EEGFYWMQLI…QIQVDWQLED (78 aa)) enclose the PRC barrel domain.

It belongs to the RimM family. In terms of assembly, binds ribosomal protein uS19.

The protein resides in the cytoplasm. In terms of biological role, an accessory protein needed during the final step in the assembly of 30S ribosomal subunit, possibly for assembly of the head region. Essential for efficient processing of 16S rRNA. May be needed both before and after RbfA during the maturation of 16S rRNA. It has affinity for free ribosomal 30S subunits but not for 70S ribosomes. In Hydrogenovibrio crunogenus (strain DSM 25203 / XCL-2) (Thiomicrospira crunogena), this protein is Ribosome maturation factor RimM.